Consider the following 250-residue polypeptide: Recombination protein RecR (250 aa).

The segment at 56 to 71 adopts a C4-type zinc-finger fold; that stretch reads CRICHNISQEDVCRIC. The 149-residue stretch at 79 to 227 folds into the Toprim domain; it reads SIICVVEESK…TVTRLASGIP (149 aa). The interval 148–172 is disordered; the sequence is LGDADTPADGESSGADAAETGNAKT.

It belongs to the RecR family.

May play a role in DNA repair. It seems to be involved in an RecBC-independent recombinational process of DNA repair. It may act with RecF and RecO. In Corynebacterium jeikeium (strain K411), this protein is Recombination protein RecR.